The chain runs to 590 residues: UvrABC system protein C (590 aa).

Residues Asp-14–Val-91 form the GIY-YIG domain. Residues Asn-196 to Thr-231 form the UVR domain.

Belongs to the UvrC family. In terms of assembly, interacts with UvrB in an incision complex.

The protein localises to the cytoplasm. Its function is as follows. The UvrABC repair system catalyzes the recognition and processing of DNA lesions. UvrC both incises the 5' and 3' sides of the lesion. The N-terminal half is responsible for the 3' incision and the C-terminal half is responsible for the 5' incision. The chain is UvrABC system protein C from Bacillus subtilis (strain 168).